A 460-amino-acid chain; its full sequence is Putative 2,3-dihydroxypropane-1-sulfonate exporter (460 aa).

Residues 1–18 (MSQTSSNPATLRLPFKEK) lie on the Cytoplasmic side of the membrane. The helical transmembrane segment at 19–39 (LAYGLGDLGSNILLDIGTLYL) threads the bilayer. Residues 40 to 46 (LKFYTDV) lie on the Periplasmic side of the membrane. The chain crosses the membrane as a helical span at residues 47-67 (LGLPGTYGGIIFLIAKFFTAF). Topologically, residues 68 to 91 (TDMGTGIMLDSRRKIGPKGKFRPF) are cytoplasmic. The chain crosses the membrane as a helical span at residues 92-112 (VLYAAFPVTLLAIANFVGTPF). Topologically, residues 113 to 122 (EVTGKTVVAT) are periplasmic. The chain crosses the membrane as a helical span at residues 123-143 (MLFMLYGLVFSMMNCSYGAMV). The Cytoplasmic segment spans residues 144–161 (PAITKNPDERASLAAWRQ). The helical transmembrane segment at 162–182 (GGATLGLLLCTVGFVPVMNLI) threads the bilayer. At 183 to 190 (EGNAQLSY) the chain is on the periplasmic side. The chain crosses the membrane as a helical span at residues 191 to 211 (IFAATLFSLFGLLFMWLCYAG). Topologically, residues 212–242 (VKERYVEVKPVDSAQKPGLLQSFRAIAGNRP) are cytoplasmic. The helical transmembrane segment at 243–263 (LFILCIANLCTLGAFNVKLAI) threads the bilayer. Over 264–275 (QVYYTQYVLNDP) the chain is Periplasmic. The chain crosses the membrane as a helical span at residues 276-296 (ILLSWMGFFSMGCIFIGVFLM). The Cytoplasmic segment spans residues 297-307 (PGAVRRFGKKK). Residues 308-328 (VYIGGLLIWVAGDLLNYFFGG) form a helical membrane-spanning segment. A topological domain (periplasmic) is located at residue Gly-329. The helical transmembrane segment at 330–350 (SVSFVAFSCLAFFGSAFVNSL) threads the bilayer. At 351 to 386 (NWALVSDTVEYGEWRTGVRSEGTVYTGFTFFRKVSQ) the chain is on the cytoplasmic side. The chain crosses the membrane as a helical span at residues 387–407 (ALAGFFPGWMLTQIGYIPNVV). The Periplasmic portion of the chain corresponds to 408–418 (QSAGTVEGLRQ). A helical transmembrane segment spans residues 419 to 439 (LIFIYPCVLAVITIIAMGCFY). Topologically, residues 440 to 460 (NLNEKMYVRIVEEIEARKHTV) are cytoplasmic.

The protein belongs to the sodium:galactoside symporter (TC 2.A.2) family.

It is found in the cell inner membrane. Its function is as follows. Could be involved in the export of 2,3-dihydroxypropane-1-sulfonate (DHPS). This chain is Putative 2,3-dihydroxypropane-1-sulfonate exporter (yihP), found in Salmonella typhimurium (strain LT2 / SGSC1412 / ATCC 700720).